Here is a 77-residue protein sequence, read N- to C-terminus: MASKNLFVLFFIFALFAANIAALQCPKNSEVRNSPCPRTCNDPYGQNSCITVIRETCHCKGELVFDSDSICVPISQC.

An N-terminal signal peptide occupies residues 1–22; sequence MASKNLFVLFFIFALFAANIAA. 4 disulfide bridges follow: Cys-25-Cys-57, Cys-36-Cys-49, Cys-40-Cys-77, and Cys-59-Cys-71.

It belongs to the protease inhibitor I40 family. Hemolymph.

Its subcellular location is the secreted. Highly specific for fungal protease and subtilisin. The chain is Fungal protease inhibitor F from Bombyx mori (Silk moth).